A 379-amino-acid polypeptide reads, in one-letter code: MSEEVSKRVEEEADTPGLEGQSDDSSDEGDASGDTEMDFLRSLFSRTLGLSPGDKVLDELTLDSVARYILSGKCKNIICMVGAGISTSAGIPDFRSPGTGLYANLQKYNLPYPEAIFQIDYFKKHPEPFFALARELYPGQFKPTVYHYFIKMLKDKGLLRRCYSQNIDTLERVAGLEGEDLIEAHGTFHTSHCVSFLCRKEYSMDWMKNQIFSEEIPKCDSCGSLVKPDIVFFGESLPSRFFTSMKADFPQCDLLIIMGTSLQVQPFASLVSRVSNRCPRLLINMEKTGQSEFGMGLFSFGGGMDFDSDKAYRDVAHLSTCDDGCMTLAELLGWKKELEEMVKREHALIDSKDAKKTDKEASQSSKSAVAEAEKTDKTE.

The span at 1-10 (MSEEVSKRVE) shows a compositional bias: basic and acidic residues. The tract at residues 1-32 (MSEEVSKRVEEEADTPGLEGQSDDSSDEGDAS) is disordered. Residues 21–32 (QSDDSSDEGDAS) show a composition bias toward acidic residues. One can recognise a Deacetylase sirtuin-type domain in the interval 55 to 335 (KVLDELTLDS…MTLAELLGWK (281 aa)). Residues 83-87 (AGIST), 93-95 (DFR), and 165-168 (QNID) each bind NAD(+). His-185 acts as the Proton acceptor in catalysis. Residues Cys-193, Cys-198, Cys-219, and Cys-222 each contribute to the Zn(2+) site. NAD(+)-binding positions include 260–261 (TS), 284–286 (NME), and Cys-321. Residues 349–361 (IDSKDAKKTDKEA) show a composition bias toward basic and acidic residues. A disordered region spans residues 349–379 (IDSKDAKKTDKEASQSSKSAVAEAEKTDKTE).

Belongs to the sirtuin family. Class I subfamily. It depends on Zn(2+) as a cofactor.

The protein resides in the cytoplasm. The protein localises to the nucleus. The enzyme catalyses N(6)-acetyl-L-lysyl-[protein] + NAD(+) + H2O = 2''-O-acetyl-ADP-D-ribose + nicotinamide + L-lysyl-[protein]. It catalyses the reaction N(6)-tetradecanoyl-L-lysyl-[protein] + NAD(+) + H2O = 2''-O-tetradecanoyl-ADP-D-ribose + nicotinamide + L-lysyl-[protein]. The catalysed reaction is N(6)-hexadecanoyl-L-lysyl-[protein] + NAD(+) + H2O = 2''-O-hexadecanoyl-ADP-D-ribose + nicotinamide + L-lysyl-[protein]. Its function is as follows. NAD-dependent protein deacetylase, which deacetylates internal lysines on histone and alpha-tubulin as well as many other proteins such as key transcription factors. Participates in the modulation of multiple and diverse biological processes such as cell cycle control, genomic integrity, microtubule dynamics, cell differentiation, metabolic networks, and autophagy. Plays a major role in the control of cell cycle progression and genomic stability. Deacetylates histone H4 at 'Lys-16' (H4K16ac) at the VEGFA promoter. Thereby contributes to regulate expression of vegfa, a key regulator of angiogenesis. In addition to protein deacetylase activity, also has activity toward long-chain fatty acyl groups and mediates protein-lysine demyristoylation and depalmitoylation of target proteins. This chain is NAD-dependent protein deacetylase sirtuin-2 (sirt2), found in Danio rerio (Zebrafish).